The following is a 163-amino-acid chain: uncharacterized protein (163 aa).

The tract at residues 144 to 163 is disordered; the sequence is WSHSQSQLGTPGRGKGALGF. A compositionally biased stretch (gly residues) spans 154–163; that stretch reads PGRGKGALGF.

This is an uncharacterized protein from Homo sapiens (Human).